Here is a 123-residue protein sequence, read N- to C-terminus: Hydrogenase maturation factor HypA (123 aa).

Ni(2+) is bound at residue histidine 2. Cysteine 73, cysteine 76, cysteine 90, and cysteine 93 together coordinate Zn(2+).

It belongs to the HypA/HybF family.

In terms of biological role, involved in the maturation of [NiFe] hydrogenases. Required for nickel insertion into the metal center of the hydrogenase. The sequence is that of Hydrogenase maturation factor HypA from Roseiflexus sp. (strain RS-1).